Reading from the N-terminus, the 402-residue chain is Bacillibactin exporter (402 aa).

11 helical membrane passes run 4–24 (IIAL…LIPV), 39–59 (VSLI…IAGY), 69–89 (ILLP…FAST), 104–124 (LQGI…GDLF), 162–182 (FVPF…VLFL), 212–232 (WLYT…GVLF), 247–267 (VAKG…SFIA), 278–298 (MKFC…ALWW), 302–322 (FYFL…ALPA), 342–362 (FYNS…AALM), and 368–388 (IIFI…LFTV).

This sequence belongs to the major facilitator superfamily.

The protein localises to the cell membrane. Involved in secretion of bacillibactin. In Bacillus subtilis (strain 168), this protein is Bacillibactin exporter (ymfD).